The chain runs to 366 residues: Ferrochelatase (366 aa).

His-209 and Glu-290 together coordinate Fe cation.

This sequence belongs to the ferrochelatase family.

The protein localises to the cytoplasm. The enzyme catalyses heme b + 2 H(+) = protoporphyrin IX + Fe(2+). Its pathway is porphyrin-containing compound metabolism; protoheme biosynthesis; protoheme from protoporphyrin-IX: step 1/1. In terms of biological role, catalyzes the ferrous insertion into protoporphyrin IX. The chain is Ferrochelatase from Teredinibacter turnerae (strain ATCC 39867 / T7901).